Consider the following 101-residue polypeptide: Small ribosomal subunit protein uS14 (101 aa).

Belongs to the universal ribosomal protein uS14 family. Part of the 30S ribosomal subunit. Contacts proteins S3 and S10.

Binds 16S rRNA, required for the assembly of 30S particles and may also be responsible for determining the conformation of the 16S rRNA at the A site. In Chlamydia trachomatis serovar L2 (strain ATCC VR-902B / DSM 19102 / 434/Bu), this protein is Small ribosomal subunit protein uS14.